The chain runs to 253 residues: uncharacterized protein (253 aa).

S145 provides a ligand contact to substrate. Catalysis depends on Y159, which acts as the Proton acceptor.

Belongs to the short-chain dehydrogenases/reductases (SDR) family.

This is an uncharacterized protein from Mycobacterium tuberculosis (strain CDC 1551 / Oshkosh).